Reading from the N-terminus, the 432-residue chain is Adenylosuccinate synthetase (432 aa).

Residues 12–18 and 40–42 each bind GTP; these read GDEGKGK and GHT. The active-site Proton acceptor is the D13. Mg(2+) is bound by residues D13 and G40. IMP is bound by residues 13 to 16, 38 to 41, T126, R140, Q219, T234, and R300; these read DEGK and NAGH. Catalysis depends on H41, which acts as the Proton donor. 296 to 302 contacts substrate; the sequence is STTGRPR. GTP is bound by residues R302, 328–330, and 410–412; these read KLD and STG.

Belongs to the adenylosuccinate synthetase family. In terms of assembly, homodimer. It depends on Mg(2+) as a cofactor.

It localises to the cytoplasm. It carries out the reaction IMP + L-aspartate + GTP = N(6)-(1,2-dicarboxyethyl)-AMP + GDP + phosphate + 2 H(+). Its pathway is purine metabolism; AMP biosynthesis via de novo pathway; AMP from IMP: step 1/2. Functionally, plays an important role in the de novo pathway of purine nucleotide biosynthesis. Catalyzes the first committed step in the biosynthesis of AMP from IMP. This chain is Adenylosuccinate synthetase, found in Aquifex aeolicus (strain VF5).